Here is a 338-residue protein sequence, read N- to C-terminus: Uroporphyrinogen decarboxylase (338 aa).

Substrate is bound by residues 27-31, D77, Y151, S203, and H317; that span reads RQAGR.

It belongs to the uroporphyrinogen decarboxylase family. Homodimer.

Its subcellular location is the cytoplasm. The enzyme catalyses uroporphyrinogen III + 4 H(+) = coproporphyrinogen III + 4 CO2. Its pathway is porphyrin-containing compound metabolism; protoporphyrin-IX biosynthesis; coproporphyrinogen-III from 5-aminolevulinate: step 4/4. In terms of biological role, catalyzes the decarboxylation of four acetate groups of uroporphyrinogen-III to yield coproporphyrinogen-III. The sequence is that of Uroporphyrinogen decarboxylase from Wolbachia sp. subsp. Drosophila simulans (strain wRi).